The following is a 236-amino-acid chain: Factor V activator RVV-V alpha (236 aa).

The Peptidase S1 domain maps to 1-227 (VVGGDECNIN…YNNWIQNIIA (227 aa)). Disulfide bonds link Cys7–Cys141, Cys28–Cys44, Cys76–Cys234, Cys120–Cys188, Cys152–Cys167, and Cys178–Cys203. Residues His43 and Asp88 each act as charge relay system in the active site. Ser182 acts as the Charge relay system in catalysis. Asn229 carries N-linked (GlcNAc...) asparagine glycosylation.

Belongs to the peptidase S1 family. Snake venom subfamily. In terms of assembly, monomer. In terms of tissue distribution, expressed by the venom gland.

The protein localises to the secreted. The catalysed reaction is Fully activates human clotting factor V by a single cleavage at the 1545-Trp-Tyr-Leu-Arg-|-Ser-Asn-Asn-Gly-1552 bond. Cattle, but not rabbit, factor V is cleaved, and no other proteins of the clotting system are attacked. Esterase activity is observed on Bz-Arg-OEt and Tos-Arg-OMe, and amidase activity on Phe-pipecolyl-Arg-NHPhNO2.. With respect to regulation, inhibited by D-Phe-Pro-Arg-chloromethyl ketone (FPRCK) (97%), PMSF (76%), and benzamidine (50%). Is not inhibited by BPTI, antithrombin and EDTA. Venom serine protease that activates factor V (F5) in a calcium-independent manner. It cleaves the Arg(1545)-Ser(1546) linkage in the human factor V molecule. Induces the coagulation of mammalian plasma. This chain is Factor V activator RVV-V alpha, found in Daboia siamensis (Eastern Russel's viper).